The chain runs to 436 residues: Carboxypeptidase A5 (436 aa).

The signal sequence occupies residues 1 to 33; the sequence is MQGTPAGGTSPGPSPMDRQTLLVFSLILAAALG. Residues 34 to 126 constitute a propeptide, activation peptide; the sequence is QMNFTGDQVL…EREAMAKSRR (93 aa). The region spanning 138–431 is the Peptidase M14 domain; sequence SYHTLEEISS…MALRTIMEHT (294 aa). Zn(2+) is bound by residues His-196 and Glu-199. Residues 196–199, Arg-254, and 271–272 contribute to the substrate site; these read HSRE and NR. Cys-265 and Cys-288 are joined by a disulfide. Zn(2+) is bound at residue His-323. Substrate is bound by residues 324–325 and Tyr-375; that span reads SY. The active-site Proton donor/acceptor is Glu-397.

The protein belongs to the peptidase M14 family. It depends on Zn(2+) as a cofactor.

Its subcellular location is the secreted. The protein is Carboxypeptidase A5 (CPA5) of Macaca fascicularis (Crab-eating macaque).